The primary structure comprises 230 residues: Lipoprotein-releasing system ATP-binding protein LolD (230 aa).

An ABC transporter domain is found at 6 to 230; the sequence is LQASNLEKEY…GHFILPSETL (225 aa). 42–49 provides a ligand contact to ATP; that stretch reads GSSGSGKS.

It belongs to the ABC transporter superfamily. Lipoprotein translocase (TC 3.A.1.125) family. In terms of assembly, the complex is composed of two ATP-binding proteins (LolD) and two transmembrane proteins (LolC and LolE).

It is found in the cell inner membrane. In terms of biological role, part of the ABC transporter complex LolCDE involved in the translocation of mature outer membrane-directed lipoproteins, from the inner membrane to the periplasmic chaperone, LolA. Responsible for the formation of the LolA-lipoprotein complex in an ATP-dependent manner. This Hydrogenovibrio crunogenus (strain DSM 25203 / XCL-2) (Thiomicrospira crunogena) protein is Lipoprotein-releasing system ATP-binding protein LolD.